The following is a 294-amino-acid chain: NADH-cytochrome b5 reductase 1 (294 aa).

Residues 13–33 form a helical membrane-spanning segment; sequence PHASFLGGLVVAAILGLFIFF. An FAD-binding FR-type domain is found at 44-147; it reads VEWRSFKLVD…KGPKGKFVYT (104 aa). Residues 127–142 and 153–185 each bind FAD; these read SLLT…GPKG and HLVM…RLSL.

This sequence belongs to the flavoprotein pyridine nucleotide cytochrome reductase family. Monomer. Component of the 2-(3-amino-3-carboxypropyl)histidine synthase complex composed of DPH1, DPH2, DPH3 and a NADH-dependent reductase, predominantly CBR1. The cofactor is FAD.

The protein localises to the mitochondrion outer membrane. The enzyme catalyses 2 Fe(III)-[cytochrome b5] + NADH = 2 Fe(II)-[cytochrome b5] + NAD(+) + H(+). It catalyses the reaction 2 Fe(3+)-[Dph3] + NADH = 2 Fe(2+)-[Dph3] + NAD(+) + H(+). Its pathway is protein modification; peptidyl-diphthamide biosynthesis. NADH-dependent reductase for DPH3 and cytochrome b5. Required for the first step of diphthamide biosynthesis, a post-translational modification of histidine which occurs in elongation factor 2. DPH1 and DPH2 transfer a 3-amino-3-carboxypropyl (ACP) group from S-adenosyl-L-methionine (SAM) to a histidine residue, the reaction is assisted by a reduction system comprising DPH3 and a NADH-dependent reductase, predominantly CBR1. By reducing DPH3, also involved in the formation of the tRNA wobble base modification mcm5s 2U (5-methoxycarbonylmethyl-2-thiouridine), mediated by the elongator complex. The cytochrome b5/NADH cytochrome b5 reductase electron transfer system supports the catalytic activity of several sterol biosynthetic enzymes. In Cryptococcus neoformans var. neoformans serotype D (strain B-3501A) (Filobasidiella neoformans), this protein is NADH-cytochrome b5 reductase 1 (CBR1).